A 468-amino-acid chain; its full sequence is Glutamine synthetase (468 aa).

The GS beta-grasp domain occupies 14-98; the sequence is HDVKYVDLRF…ILCDVYEPST (85 aa). Residues 106–468 form the GS catalytic domain; the sequence is PRGIAKAAEK…PIEYKMYYSV (363 aa). The Mg(2+) site is built by glutamate 131 and glutamate 133. Glutamate 209 is an ATP binding site. Positions 214 and 221 each coordinate Mg(2+). L-glutamate contacts are provided by residues 265–266 and glycine 266; that span reads NG. Histidine 270 provides a ligand contact to Mg(2+). Residues 272 to 274 and serine 274 contribute to the ATP site; that span reads HQS. L-glutamate-binding residues include arginine 322, glutamate 328, and arginine 340. Residues arginine 340, arginine 345, and lysine 353 each coordinate ATP. Glutamate 358 serves as a coordination point for Mg(2+). Position 360 (arginine 360) interacts with L-glutamate. Tyrosine 398 is modified (O-AMP-tyrosine).

Belongs to the glutamine synthetase family. As to quaternary structure, oligomer of 12 subunits arranged in the form of two hexameric ring. The cofactor is Mg(2+).

It localises to the cytoplasm. The catalysed reaction is L-glutamate + NH4(+) + ATP = L-glutamine + ADP + phosphate + H(+). Its activity is regulated as follows. The activity of this enzyme could be controlled by adenylation under conditions of abundant glutamine. Catalyzes the ATP-dependent biosynthesis of glutamine from glutamate and ammonia. The protein is Glutamine synthetase of Azospirillum brasilense.